The sequence spans 481 residues: UDP-glycosyltransferase 72E2 (481 aa).

Residue H18 is the Proton acceptor of the active site. H18 contacts an anthocyanidin. The active-site Charge relay is the D111. Residues A346, Q348, H363, W366, S368, and E371 each coordinate UDP-alpha-D-glucose. A386 provides a ligand contact to an anthocyanidin. 2 residues coordinate UDP-alpha-D-glucose: E387 and Q388.

It belongs to the UDP-glycosyltransferase family. In terms of tissue distribution, expressed in seedlings and roots.

It catalyses the reaction (E)-4-coumarate + UDP-alpha-D-glucose = 4-O-(beta-D-glucosyl)-trans-4-coumarate + UDP + H(+). The enzyme catalyses (E)-coniferol + UDP-alpha-D-glucose = 4-O-(beta-D-glucosyl)-(E)-coniferol + UDP + H(+). It carries out the reaction (E)-sinapyl alcohol + UDP-alpha-D-glucose = 4-O-(beta-D-glucosyl)-trans-4-sinapoyl alcohol + UDP + H(+). The catalysed reaction is (E)-sinapate + UDP-alpha-D-glucose = 4-O-(beta-D-glucosyl)-trans-sinapate + UDP + H(+). It catalyses the reaction (E)-coniferaldehyde + UDP-alpha-D-glucose = 4-O-(beta-D-glucosyl)-4-(E)-coniferyl aldehyde + UDP + H(+). The enzyme catalyses (E)-sinapaldehyde + UDP-alpha-D-glucose = 4-O-(beta-D-glucosyl)-4-trans-sinapoyl aldehyde + UDP + H(+). Involved in the O-glucosylation of monolignols (alcohol monomers of lignin). Glucosylates coniferyl alcohol to form coniferyl alcohol 4-O-glucoside. Glucosylates sinapyl alcohol to form sinapyl alcohol 4-O-glucoside. Glucosylates coniferyl aldehyde to form coniferyl aldehyde 4-O-glucoside. Glucosylates sinapyl aldehyde to form sinapyl aldehyde 4-O-glucoside. Possesses low activity with sinapate and ferulate as substrates. The protein is UDP-glycosyltransferase 72E2 of Arabidopsis thaliana (Mouse-ear cress).